A 241-amino-acid chain; its full sequence is Small ribosomal subunit protein uS3 (241 aa).

Positions 39-107 constitute a KH type-2 domain; it reads MRKFVMDELK…ETHLNIVEVR (69 aa). The segment at 214-241 is disordered; the sequence is ASERRALEGDAQGPASRDRDRDRRRDNA. Basic and acidic residues predominate over residues 229–241; the sequence is SRDRDRDRRRDNA.

Belongs to the universal ribosomal protein uS3 family. Part of the 30S ribosomal subunit. Forms a tight complex with proteins S10 and S14.

Binds the lower part of the 30S subunit head. Binds mRNA in the 70S ribosome, positioning it for translation. This Rhizobium rhizogenes (strain K84 / ATCC BAA-868) (Agrobacterium radiobacter) protein is Small ribosomal subunit protein uS3.